The following is a 319-amino-acid chain: GTP 3',8-cyclase (319 aa).

One can recognise a Radical SAM core domain in the interval 4–227 (KHGRKINYLR…VETDKSSTAL (224 aa)). Arg-13 provides a ligand contact to GTP. Positions 20 and 24 each coordinate [4Fe-4S] cluster. Tyr-26 provides a ligand contact to S-adenosyl-L-methionine. [4Fe-4S] cluster is bound at residue Cys-27. Arg-63 lines the GTP pocket. Gly-67 lines the S-adenosyl-L-methionine pocket. Thr-94 provides a ligand contact to GTP. Ser-118 contributes to the S-adenosyl-L-methionine binding site. Position 155 (Lys-155) interacts with GTP. Met-189 is a binding site for S-adenosyl-L-methionine. Positions 249 and 252 each coordinate [4Fe-4S] cluster. GTP is bound at residue 254 to 256 (RVR). Cys-266 lines the [4Fe-4S] cluster pocket.

The protein belongs to the radical SAM superfamily. MoaA family. In terms of assembly, monomer and homodimer. Requires [4Fe-4S] cluster as cofactor.

The catalysed reaction is GTP + AH2 + S-adenosyl-L-methionine = (8S)-3',8-cyclo-7,8-dihydroguanosine 5'-triphosphate + 5'-deoxyadenosine + L-methionine + A + H(+). It participates in cofactor biosynthesis; molybdopterin biosynthesis. In terms of biological role, catalyzes the cyclization of GTP to (8S)-3',8-cyclo-7,8-dihydroguanosine 5'-triphosphate. In Clostridium botulinum (strain Langeland / NCTC 10281 / Type F), this protein is GTP 3',8-cyclase.